Consider the following 515-residue polypeptide: Organic cation/carnitine transporter 5 (515 aa).

The Cytoplasmic portion of the chain corresponds to 1–43 (MADSLAPLLPTHIEEDEDTSSPLTFDKILEKSLSDFGFSQFLQ). The chain crosses the membrane as a helical span at residues 44 to 64 (IVLVGLALTFDSQQIFITVFT). Residues 65 to 124 (DAYPTWHCLDHTICNPATTDICKIPRSAWDWDGGFKGKSVISEFDLECSSSFLRSLPSST) lie on the Extracellular side of the membrane. Residues 125–145 (FYVGSIVGGVVLAMIPDGSLG) form a helical membrane-spanning segment. Residues 146–149 (RKQL) lie on the Cytoplasmic side of the membrane. The helical transmembrane segment at 150–172 (LFFSSFAMSLTGISIFLSSNIWI) threads the bilayer. The Extracellular segment spans residues 173–177 (YSFLK). A helical membrane pass occupies residues 178 to 195 (FVIGFARSQTGTYALVLI). Residue 195–202 (ISERISTK) coordinates ATP. Over 196 to 208 (SERISTKWRPRAT) the chain is Cytoplasmic. The chain crosses the membrane as a helical span at residues 209–229 (MVPFTLFVLGFMSLSGIAYLV). The Extracellular segment spans residues 230–235 (RHASWK). The helical transmembrane segment at 236-256 (VLYLCTSIPAGIHSIFIYFFA) threads the bilayer. The Cytoplasmic segment spans residues 257–320 (LESPRWLHLE…LFIIKWAFRR (64 aa)). A helical transmembrane segment spans residues 321 to 341 (VTLVMIIMFGLGMSYYGVPLA). Topologically, residues 342–350 (VRDIKVNIY) are extracellular. Residues 351 to 371 (MSEALNAMVELPTFVVTPILL) traverse the membrane as a helical segment. Residues 372-379 (EQFSRRSS) lie on the Cytoplasmic side of the membrane. A helical membrane pass occupies residues 380–400 (VLVNCLIGGASGVLCFVMSLY). The Extracellular segment spans residues 401-411 (GRTKIAFALEL). A helical transmembrane segment spans residues 412-432 (GSFFCARIGFNLMAIYLVELF). The Cytoplasmic portion of the chain corresponds to 433–441 (PTCVRNSAT). The helical transmembrane segment at 442 to 462 (MMLRQALVVGGACCPLIASLG) threads the bilayer. Residues 463 to 467 (RNVPS) are Extracellular-facing. Residues 468 to 488 (LSFAVFGFAMSGLGLFALLLP) traverse the membrane as a helical segment. Topologically, residues 489-515 (ETKGLSLCDTMEEQEQRDQALKTSHSC) are cytoplasmic.

It belongs to the major facilitator (TC 2.A.1) superfamily. Organic cation transporter (TC 2.A.1.19) family. In terms of tissue distribution, mostly expressed in leaves and siliques, and, to a lower extent, in roots, stems and flowers.

The protein localises to the vacuole membrane. Functionally, high affinity carnitine transporter involved in the active cellular uptake of carnitine. Also transports organic cations. This chain is Organic cation/carnitine transporter 5 (OCT5), found in Arabidopsis thaliana (Mouse-ear cress).